The chain runs to 235 residues: MTQQFYVSPEQLMKDRADFARKGIARGRSVVVISCADGIALIAENPSPSLHKIGEIYDKIAFAAVGKYNEFESLRQAGVRYADVRGYSYDREDVTARGLASVYAQSLGAVFTAEQKPFEVELAVAEVGVTQEQDHLYRLTFDGSIADENGFVVMGGLADQISDVVNGAWEPELNLAGAMQLALRALATNKEVEELPAAAVEAAVLYRDSESNRGSRRAFRRLLPEDMTRLLTEES.

It belongs to the peptidase T1A family. The 20S proteasome core is composed of 14 alpha and 14 beta subunits that assemble into four stacked heptameric rings, resulting in a barrel-shaped structure. The two inner rings, each composed of seven catalytic beta subunits, are sandwiched by two outer rings, each composed of seven alpha subunits. The catalytic chamber with the active sites is on the inside of the barrel. Has a gated structure, the ends of the cylinder being occluded by the N-termini of the alpha-subunits. Is capped by the proteasome-associated ATPase, ARC.

Its subcellular location is the cytoplasm. Its pathway is protein degradation; proteasomal Pup-dependent pathway. The formation of the proteasomal ATPase ARC-20S proteasome complex, likely via the docking of the C-termini of ARC into the intersubunit pockets in the alpha-rings, may trigger opening of the gate for substrate entry. Interconversion between the open-gate and close-gate conformations leads to a dynamic regulation of the 20S proteasome proteolysis activity. Functionally, component of the proteasome core, a large protease complex with broad specificity involved in protein degradation. In Paenarthrobacter aurescens (strain TC1), this protein is Proteasome subunit alpha.